The sequence spans 443 residues: 23S rRNA (uracil(1939)-C(5))-methyltransferase RlmD (443 aa).

The TRAM domain maps to 12-70; it reads SKQLSAKVSLQVTRLDHLGAGIAQHNGKVVFIPGVLPGEKAMVQLTEQKKRYSRAKLLN. Residues Cys-83, Cys-89, Cys-92, and Cys-171 each contribute to the [4Fe-4S] cluster site. S-adenosyl-L-methionine contacts are provided by Gln-277, Phe-306, Asn-311, Glu-327, Asp-354, and Asp-374. The active-site Nucleophile is the Cys-400.

It belongs to the class I-like SAM-binding methyltransferase superfamily. RNA M5U methyltransferase family. RlmD subfamily.

It carries out the reaction uridine(1939) in 23S rRNA + S-adenosyl-L-methionine = 5-methyluridine(1939) in 23S rRNA + S-adenosyl-L-homocysteine + H(+). Functionally, catalyzes the formation of 5-methyl-uridine at position 1939 (m5U1939) in 23S rRNA. The polypeptide is 23S rRNA (uracil(1939)-C(5))-methyltransferase RlmD (Shewanella woodyi (strain ATCC 51908 / MS32)).